A 429-amino-acid chain; its full sequence is tRNA modification GTPase MnmE (429 aa).

(6S)-5-formyl-5,6,7,8-tetrahydrofolate-binding residues include R20, E77, and R117. The TrmE-type G domain occupies 213 to 353 (GFEVAILGAP…LVKAVSHRLS (141 aa)). N223 provides a ligand contact to K(+). GTP contacts are provided by residues 223–228 (NVGKSS), 242–248 (SSIAGTT), and 267–270 (DTAG). S227 contacts Mg(2+). Residues S242, I244, and T247 each contribute to the K(+) site. T248 is a binding site for Mg(2+). K429 is a (6S)-5-formyl-5,6,7,8-tetrahydrofolate binding site.

It belongs to the TRAFAC class TrmE-Era-EngA-EngB-Septin-like GTPase superfamily. TrmE GTPase family. In terms of assembly, homodimer. Heterotetramer of two MnmE and two MnmG subunits. K(+) serves as cofactor.

It is found in the cytoplasm. Its function is as follows. Exhibits a very high intrinsic GTPase hydrolysis rate. Involved in the addition of a carboxymethylaminomethyl (cmnm) group at the wobble position (U34) of certain tRNAs, forming tRNA-cmnm(5)s(2)U34. In Dinoroseobacter shibae (strain DSM 16493 / NCIMB 14021 / DFL 12), this protein is tRNA modification GTPase MnmE.